The chain runs to 517 residues: 2,3-bisphosphoglycerate-independent phosphoglycerate mutase (517 aa).

Residues Asp-12 and Ser-62 each contribute to the Mn(2+) site. Catalysis depends on Ser-62, which acts as the Phosphoserine intermediate. Substrate-binding positions include His-123, 153-154 (RD), Arg-185, Arg-191, 261-264 (RSDR), and Lys-336. Mn(2+) is bound by residues Asp-403, His-407, Asp-444, His-445, and His-463.

The protein belongs to the BPG-independent phosphoglycerate mutase family. As to quaternary structure, monomer. Mn(2+) is required as a cofactor.

It catalyses the reaction (2R)-2-phosphoglycerate = (2R)-3-phosphoglycerate. It participates in carbohydrate degradation; glycolysis; pyruvate from D-glyceraldehyde 3-phosphate: step 3/5. In terms of biological role, catalyzes the interconversion of 2-phosphoglycerate and 3-phosphoglycerate. The sequence is that of 2,3-bisphosphoglycerate-independent phosphoglycerate mutase from Methylobacillus flagellatus (strain ATCC 51484 / DSM 6875 / VKM B-1610 / KT).